We begin with the raw amino-acid sequence, 170 residues long: ATP synthase subunit b (170 aa).

A helical membrane pass occupies residues 11 to 31; it reads AFTFGDAFFTLFAFAILLVLI.

It belongs to the ATPase B chain family. In terms of assembly, F-type ATPases have 2 components, F(1) - the catalytic core - and F(0) - the membrane proton channel. F(1) has five subunits: alpha(3), beta(3), gamma(1), delta(1), epsilon(1). F(0) has three main subunits: a(1), b(2) and c(10-14). The alpha and beta chains form an alternating ring which encloses part of the gamma chain. F(1) is attached to F(0) by a central stalk formed by the gamma and epsilon chains, while a peripheral stalk is formed by the delta and b chains.

It is found in the cell membrane. Functionally, f(1)F(0) ATP synthase produces ATP from ADP in the presence of a proton or sodium gradient. F-type ATPases consist of two structural domains, F(1) containing the extramembraneous catalytic core and F(0) containing the membrane proton channel, linked together by a central stalk and a peripheral stalk. During catalysis, ATP synthesis in the catalytic domain of F(1) is coupled via a rotary mechanism of the central stalk subunits to proton translocation. Component of the F(0) channel, it forms part of the peripheral stalk, linking F(1) to F(0). In Listeria innocua serovar 6a (strain ATCC BAA-680 / CLIP 11262), this protein is ATP synthase subunit b.